The following is a 155-amino-acid chain: MNNNATHNAPNLRTLAEGVLQPLGYEVLDVQVQNPGRRPIVVIRMDRLDEQPVTVEDLETASRAVGAEFDRVDPIAGEYRLELESPGAKRPLTRARHYERMLGLKARVRGDGHSFTAPIKAVDGEQVTFDVGGEDVTLTVGTFQGNLAEFPDRHR.

Belongs to the RimP family.

It localises to the cytoplasm. In terms of biological role, required for maturation of 30S ribosomal subunits. The polypeptide is Ribosome maturation factor RimP (Deinococcus geothermalis (strain DSM 11300 / CIP 105573 / AG-3a)).